The primary structure comprises 167 residues: Glutathione peroxidase 1 (167 aa).

Cys-41 is a catalytic residue.

The protein belongs to the glutathione peroxidase family.

The enzyme catalyses 2 glutathione + H2O2 = glutathione disulfide + 2 H2O. Its function is as follows. May constitute a glutathione peroxidase-like protective system against oxidative stresses. This is Glutathione peroxidase 1 (GPXHA-1) from Helianthus annuus (Common sunflower).